A 355-amino-acid chain; its full sequence is uncharacterized protein (355 aa).

It belongs to the 3-beta-HSD family.

This is an uncharacterized protein from Frog virus 3 (isolate Goorha) (FV-3).